The chain runs to 167 residues: UPF0179 protein PAE0681 (167 aa).

The interval Pro142–Lys167 is disordered. Low complexity predominate over residues Ser145–Ser157.

The protein belongs to the UPF0179 family.

This is UPF0179 protein PAE0681 from Pyrobaculum aerophilum (strain ATCC 51768 / DSM 7523 / JCM 9630 / CIP 104966 / NBRC 100827 / IM2).